The primary structure comprises 264 residues: 3-methyl-2-oxobutanoate hydroxymethyltransferase (264 aa).

Positions 45 and 84 each coordinate Mg(2+). 3-methyl-2-oxobutanoate is bound by residues 45–46 (DS), Asp-84, and Lys-112. Glu-114 lines the Mg(2+) pocket. Glu-181 acts as the Proton acceptor in catalysis.

Belongs to the PanB family. Homodecamer; pentamer of dimers. Mg(2+) serves as cofactor.

Its subcellular location is the cytoplasm. The enzyme catalyses 3-methyl-2-oxobutanoate + (6R)-5,10-methylene-5,6,7,8-tetrahydrofolate + H2O = 2-dehydropantoate + (6S)-5,6,7,8-tetrahydrofolate. It functions in the pathway cofactor biosynthesis; (R)-pantothenate biosynthesis; (R)-pantoate from 3-methyl-2-oxobutanoate: step 1/2. Functionally, catalyzes the reversible reaction in which hydroxymethyl group from 5,10-methylenetetrahydrofolate is transferred onto alpha-ketoisovalerate to form ketopantoate. The polypeptide is 3-methyl-2-oxobutanoate hydroxymethyltransferase (Aeromonas hydrophila subsp. hydrophila (strain ATCC 7966 / DSM 30187 / BCRC 13018 / CCUG 14551 / JCM 1027 / KCTC 2358 / NCIMB 9240 / NCTC 8049)).